Consider the following 437-residue polypeptide: Transcription factor TGAL5 (437 aa).

The interval 33–75 (QEPYSNSQSVGSTTDSSSAQNTMSQAELVSPASMRSDSGQEQQ) is disordered. Residues 37–50 (SNSQSVGSTTDSSS) are compositionally biased toward low complexity. The segment covering 51–75 (AQNTMSQAELVSPASMRSDSGQEQQ) has biased composition (polar residues). A bZIP domain is found at 126–170 (DAKTERRLAQNREAARKSRLRKKAYVQQLETSRIRLQQIEQELQR). The tract at residues 128 to 148 (KTERRLAQNREAARKSRLRKK) is basic motif. The segment at 154–168 (LETSRIRLQQIEQEL) is leucine-zipper. The 215-residue stretch at 191-405 (AVMFDMDYTR…RALSSLWASR (215 aa)) folds into the DOG1 domain.

This sequence belongs to the bZIP family. Interacts with NPR5/NH4, NH5.1 and NH5.2.

The protein resides in the nucleus. Functionally, transcriptional regulator involved in defense response. The chain is Transcription factor TGAL5 from Oryza sativa subsp. japonica (Rice).